A 284-amino-acid polypeptide reads, in one-letter code: Deoxyribonuclease-1 (284 aa).

The signal sequence occupies residues M1 to A22. Residue N40 is glycosylated (N-linked (GlcNAc...) asparagine). The active site involves E100. C123 and C126 form a disulfide bridge. N-linked (GlcNAc...) asparagine glycosylation occurs at N128. Residue H156 is part of the active site. C195 and C231 are oxidised to a cystine.

This sequence belongs to the DNase I family. Ca(2+) serves as cofactor. Mg(2+) is required as a cofactor. In terms of tissue distribution, highest expression in pancreas.

It is found in the secreted. Its subcellular location is the zymogen granule. The protein resides in the nucleus envelope. The enzyme catalyses Endonucleolytic cleavage to 5'-phosphodinucleotide and 5'-phosphooligonucleotide end-products.. Functionally, serum endocuclease secreted into body fluids by a wide variety of exocrine and endocrine organs. Expressed by non-hematopoietic tissues and preferentially cleaves protein-free DNA. Among other functions, seems to be involved in cell death by apoptosis. Binds specifically to G-actin and blocks actin polymerization. Together with DNASE1L3, plays a key role in degrading neutrophil extracellular traps (NETs). NETs are mainly composed of DNA fibers and are released by neutrophils to bind pathogens during inflammation. Degradation of intravascular NETs by DNASE1 and DNASE1L3 is required to prevent formation of clots that obstruct blood vessels and cause organ damage following inflammation. The polypeptide is Deoxyribonuclease-1 (DNASE1) (Canis lupus familiaris (Dog)).